The following is a 347-amino-acid chain: MNPLALIMITTTIILGTVIVMMSSHWLLVWIGFEMNMLAVIPVLMKRHNPRAVEAATKYFLTQATASMLLMLAVVTNLLYSGQWTVANMTNPLASTVMTLALAMKLGLSPFHFWVPEVTQGVPLLSGLILLTWQKLAPLSVLYQTSPSLNLNLLLAMATVSVAVGGWGGLNQTQLRKILAYSSIAHMGWMTIILTYNPTLTLLNLLLYILMTATTFMLFMSNSSTTTLMLSHSWNKSPVAATSVLIIMLSLGGLPPLSGFLPKWMIIQELTKNESIFLPTLMAMMALLSLYFYMRLTYSTSLTLFPSTNNMKMKWQLEDTKRTPLLSPLIVMSTLALPLAPILSTLN.

The next 10 helical transmembrane spans lie at 4–21 (LALIMITTTIILGTVIVM), 26–44 (WLLVWIGFEMNMLAVIPVL), 59–79 (YFLTQATASMLLMLAVVTNLL), 93–115 (LASTVMTLALAMKLGLSPFHFWV), 149–169 (LNLNLLLAMATVSVAVGGWGG), 178–198 (ILAYSSIAHMGWMTIILTYNP), 200–220 (LTLLNLLLYILMTATTFMLFM), 241–261 (ATSVLIIMLSLGGLPPLSGFL), 274–294 (ESIFLPTLMAMMALLSLYFYM), and 323–343 (TPLLSPLIVMSTLALPLAPIL).

Belongs to the complex I subunit 2 family. Core subunit of respiratory chain NADH dehydrogenase (Complex I) which is composed of 45 different subunits. Interacts with TMEM242.

It localises to the mitochondrion inner membrane. The catalysed reaction is a ubiquinone + NADH + 5 H(+)(in) = a ubiquinol + NAD(+) + 4 H(+)(out). In terms of biological role, core subunit of the mitochondrial membrane respiratory chain NADH dehydrogenase (Complex I) which catalyzes electron transfer from NADH through the respiratory chain, using ubiquinone as an electron acceptor. Essential for the catalytic activity and assembly of complex I. The chain is NADH-ubiquinone oxidoreductase chain 2 from Cardioderma cor (Heart-nosed bat).